The sequence spans 859 residues: DNA mismatch repair protein MutS (859 aa).

Position 617–624 (617–624) interacts with ATP; it reads GPNMGGKS. Residues 799–821 are disordered; sequence ETTSLPHEQPRAKPGKPAVPQQS.

This sequence belongs to the DNA mismatch repair MutS family.

Functionally, this protein is involved in the repair of mismatches in DNA. It is possible that it carries out the mismatch recognition step. This protein has a weak ATPase activity. The polypeptide is DNA mismatch repair protein MutS (Pseudomonas savastanoi pv. phaseolicola (strain 1448A / Race 6) (Pseudomonas syringae pv. phaseolicola (strain 1448A / Race 6))).